The sequence spans 83 residues: Small ribosomal subunit protein eS27 (83 aa).

Residues 37–59 (CSGCFKISTVFSHATTVVVCVGC) form a C4-type zinc finger.

It belongs to the eukaryotic ribosomal protein eS27 family. It depends on Zn(2+) as a cofactor.

The polypeptide is Small ribosomal subunit protein eS27 (rps-27) (Caenorhabditis elegans).